The chain runs to 60 residues: Large ribosomal subunit protein uL30 (60 aa).

It belongs to the universal ribosomal protein uL30 family. As to quaternary structure, part of the 50S ribosomal subunit.

In Moorella thermoacetica (strain ATCC 39073 / JCM 9320), this protein is Large ribosomal subunit protein uL30.